The following is a 516-amino-acid chain: Maturase K (516 aa).

Belongs to the intron maturase 2 family. MatK subfamily.

The protein resides in the plastid. It is found in the chloroplast. In terms of biological role, usually encoded in the trnK tRNA gene intron. Probably assists in splicing its own and other chloroplast group II introns. The protein is Maturase K of Chara connivens (Convergent stonewort).